Reading from the N-terminus, the 323-residue chain is Cytochrome c biogenesis protein CcsA (323 aa).

Helical transmembrane passes span Ile-9–Leu-29, Met-45–Tyr-62, Leu-71–Phe-91, Leu-98–Leu-118, Met-143–Ile-163, Ile-227–Asn-247, Thr-261–His-275, and Val-285–Val-305.

It belongs to the CcmF/CycK/Ccl1/NrfE/CcsA family. As to quaternary structure, may interact with Ccs1.

The protein localises to the plastid. It is found in the chloroplast thylakoid membrane. In terms of biological role, required during biogenesis of c-type cytochromes (cytochrome c6 and cytochrome f) at the step of heme attachment. The polypeptide is Cytochrome c biogenesis protein CcsA (Calycanthus floridus var. glaucus (Eastern sweetshrub)).